Here is a 678-residue protein sequence, read N- to C-terminus: NADPH--cytochrome P450 reductase (678 aa).

The Lumenal segment spans residues 1-21; that stretch reads MADSNMDAGTTTSEMVAEEVS. The chain crosses the membrane as a helical span at residues 22–42; sequence LFSTTDVILFSLIVGVMTYWF. Residues 43–678 lie on the Cytoplasmic side of the membrane; that stretch reads LFRKKKEEVP…KGRYSLDVWS (636 aa). S63 carries the post-translational modification Phosphoserine. The 145-residue stretch at 80–224 folds into the Flavodoxin-like domain; that stretch reads IIVFYGSQTG…DFITWREQFW (145 aa). Residues 86-91, 138-141, 173-182, and D208 contribute to the FMN site; these read SQTGTA, ATYG, and LGNKTYEHFN. An FAD-binding FR-type domain is found at 279-521; sequence KNPFLAVVTT…YVRKSQFRLP (243 aa). R298 is an NADP(+) binding site. FAD contacts are provided by residues R424, 454 to 457, 472 to 474, Y478, and 488 to 491; these read RYYS, CAV, and GVAT. NADP(+) contacts are provided by residues T535, 596-597, 602-606, and D639; these read SR and KVYVQ. W677 is an FAD binding site.

Belongs to the NADPH--cytochrome P450 reductase family. It in the N-terminal section; belongs to the flavodoxin family. The protein in the C-terminal section; belongs to the flavoprotein pyridine nucleotide cytochrome reductase family. FAD is required as a cofactor. Requires FMN as cofactor.

It localises to the endoplasmic reticulum membrane. It carries out the reaction 2 oxidized [cytochrome P450] + NADPH = 2 reduced [cytochrome P450] + NADP(+) + H(+). Its function is as follows. This enzyme is required for electron transfer from NADP to cytochrome P450 in microsomes. It can also provide electron transfer to heme oxygenase and cytochrome B5. The protein is NADPH--cytochrome P450 reductase of Bos taurus (Bovine).